A 1183-amino-acid chain; its full sequence is RecQ-like DNA helicase BLM (1183 aa).

Residues 1–109 (MEEARAATNG…AAEQDSSAEH (109 aa)) form a disordered region. Residues 14-27 (ESQKLSNGEKSSQL) show a composition bias toward polar residues. Positions 38 to 48 (ADIELEEDDYL) are enriched in acidic residues. Positions 110 to 162 (ADKGLHLEQQLYSVMEDICKLVDAIPLHELTSISCAKELLQQRELRRKLLADS) are necessary for dimerization and homooligomerization. Disordered stretches follow at residues 164 to 215 (ALNT…LPSV), 260 to 323 (PKVN…GCWD), and 381 to 408 (GSAP…PLVH). Composition is skewed to polar residues over residues 206-215 (TPKSTNLPSV) and 265-280 (KGST…SFNG). ATP contacts are provided by residues 439–443 (FRTNQ) and 463–467 (GGGKS). The region spanning 447–622 (INAALLGEDC…QNQLEMLKPQ (176 aa)) is the Helicase ATP-binding domain. The DEAH box signature appears at 566–569 (DEAH). 2 3' overhang DNA-binding regions span residues 641–644 (KPKK) and 668–670 (SRH). In terms of domain architecture, Helicase C-terminal spans 648-795 (DCLEWIKKYH…TRQTHFNNLY (148 aa)). Arg-753 contacts ATP. Positions 771–774 (RLRR) are 3' overhang DNA-binding. Positions 807, 826, 834, and 837 each coordinate Zn(2+). The DNA Holliday junction binding stretch occupies residues 865-910 (QVGGINGNRNTGSGRYTLNMMVDIFLGAKSAKIQSGIFGKGAAYSR). 3' overhang DNA-binding stretches follow at residues 881–883 (TLN), 892–896 (AKSAK), and 931–937 (YITANDQ). Residues 983–1063 (EEMVKKCLGE…DKYSEWTTPE (81 aa)) form the HRDC domain. Residues 998–1015 (KTLGKIFDVHYFNIFSTS) are necessary for ssDNA and DNA Holliday junction binding. Residues 1068–1183 (QSVDTAPGSA…HFLQPSYAVL (116 aa)) form a disordered region. Residues 1091-1101 (VTSSYFGGNAN) are compositionally biased toward polar residues. Residues 1104–1120 (RKRKRLPNSGESKRKKT) carry the Nuclear localization signal motif. The span at 1133-1142 (ARYRRARRAP) shows a compositional bias: basic residues. The segment covering 1143–1158 (GSRAAAPAQSSALRGA) has biased composition (low complexity).

The protein belongs to the helicase family. RecQ subfamily. As to quaternary structure, monomer. Homodimer (via N-terminus). Homotetramer (via N-terminus); dimer of dimers. Homohexamer (via N-terminus). Self-association negatively regulates DNA unwinding amplitude and rate. Oligomer complexes dissociate into monomer in presence of ATP. It depends on Zn(2+) as a cofactor.

The protein resides in the nucleus. It carries out the reaction Couples ATP hydrolysis with the unwinding of duplex DNA by translocating in the 3'-5' direction.. The catalysed reaction is ATP + H2O = ADP + phosphate + H(+). ATP-dependent DNA helicase that unwinds single- and double-stranded DNA in a 3'-5' direction. Participates in DNA replication and repair. Involved in 5'-end resection of DNA during double-strand break (DSB) repair. Negatively regulates sister chromatid exchange (SCE). Stimulates DNA 4-way junction branch migration and DNA Holliday junction dissolution. Binds DNA. Binds single-stranded DNA (ssDNA), forked duplex DNA and DNA Holliday junction. The polypeptide is RecQ-like DNA helicase BLM (BLM) (Gallus gallus (Chicken)).